The sequence spans 258 residues: Heat-labile enterotoxin A chain (258 aa).

An N-terminal signal peptide occupies residues 1–18 (MKNITFIFFILLASPLYA). 25-39 (RADSRPPDEIKRSGG) is a binding site for NAD(+). Glu128 is a catalytic residue. A disulfide bridge connects residues Cys205 and Cys217.

The protein belongs to the enterotoxin A family. As to quaternary structure, heterohexamer of one A chain and of five B chains.

Functionally, the biological activity of the toxin is produced by the A chain, which activates intracellular adenyl cyclase. This chain is Heat-labile enterotoxin A chain (eltA), found in Escherichia coli O78:H11 (strain H10407 / ETEC).